A 2126-amino-acid polypeptide reads, in one-letter code: Serine/threonine-protein kinase WNK1 (2126 aa).

2 disordered regions span residues 1 to 80 (MSDG…FFRR) and 93 to 202 (LPGL…QQQD). A Phosphoserine modification is found at S17. Over residues 48–64 (RTEEYRRRRHTMDKDSR) the composition is skewed to basic and acidic residues. At T58 the chain carries Phosphothreonine. 2 stretches are compositionally biased toward low complexity: residues 101 to 111 (PQPSVPAVVPQ) and 127 to 141 (VASQ…AASP). Phosphoserine occurs at positions 165 and 172. The 259-residue stretch at 221-479 (LKFDIEIGRG…IKDLLNHAFF (259 aa)) folds into the Protein kinase domain. S231 contributes to the ATP binding site. Positions 283 and 299 each coordinate chloride. Residues 301–304 (TELM) and K351 contribute to the ATP site. Catalysis depends on D368, which acts as the Proton acceptor. Chloride-binding residues include L369 and L371. 2 positions are modified to phosphoserine; by autocatalysis: S378 and S382. Positions 488–555 (ELAEEDDGEK…VCEGDHKTMA (68 aa)) are autoinhibitory domain. Basic and acidic residues predominate over residues 573-588 (QLVREEQEKRKQEESS). The disordered stretch occupies residues 573 to 865 (QLVREEQEKR…SRHEKTSRPK (293 aa)). Positions 593–614 (NEQQASVSQAGIQPLSVASTGI) are enriched in polar residues. Positions 615-626 (PTAPTTSASVST) are enriched in low complexity. Positions 629–639 (EPEEPEADQHQ) are interaction with KLHL3. 3 stretches are compositionally biased toward polar residues: residues 638 to 682 (HQQL…GSQH), 695 to 705 (TVSSIQAQSQP), and 713 to 733 (SMAQ…VLSS). A compositionally biased stretch (low complexity) spans 734–746 (QPVQHPQQQGIQP). The segment covering 750 to 789 (PQQAVQYSLPQAASSSEGTVQPVSQPQVSAGTQSSTQGVS) has biased composition (polar residues). The span at 793-823 (PPEQTPITQSQPTQPVPLVSSVDSAHSDVAS) shows a compositional bias: low complexity. Residues 826 to 836 (SDGNENAPSSS) are compositionally biased toward polar residues. Positions 844–865 (TKRHYRKSVRSRSRHEKTSRPK) are enriched in basic residues. The RFXV motif 1 motif lies at 1003–1006 (RFIV). At S1007 the chain carries Phosphoserine. 2 disordered regions span residues 1474–1507 (GQVS…LTKT) and 1557–1595 (IPVT…ASSS). The segment covering 1477–1496 (STPGTHASAPASTATGAKPG) has biased composition (low complexity). Residues 1567 to 1583 (STMSSTAVTEAGSQPQK) show a composition bias toward polar residues. An RFXV motif 2 motif is present at residues 1604–1607 (RFQV). The tract at residues 1610–1695 (TMDDAQKERK…TKVGRFQVTT (86 aa)) is disordered. Basic and acidic residues predominate over residues 1613–1629 (DAQKERKNRSEDTKSVH). Positions 1632–1650 (SSTSESSVLSSSSPESTLV) are enriched in low complexity. Short sequence motifs (RFXV motif) lie at residues 1690–1693 (RFQV) and 1702–1705 (RFSV). The span at 1709 to 1719 (EDKVTELKKEG) shows a compositional bias: basic and acidic residues. 3 disordered regions span residues 1709-1783 (EDKV…LCSK), 1856-1940 (VIIP…NLYS), and 1952-1990 (SLSA…KGTF). S1723 carries the phosphoserine modification. Residues 1738-1747 (PKKEKPELAE) show a composition bias toward basic and acidic residues. 6 positions are modified to phosphoserine: S1755, S1756, S1771, S1773, S1776, and S1865. Residues 1866 to 1878 (GRRRRPTKSKGSK) show a composition bias toward basic residues. Over residues 1879–1889 (SSRSSSLGNKS) the composition is skewed to low complexity. Residues 1890–1940 (PQLSGNLSGQSGTSVLNPQQTLHPPGNTPETGHNQLLQPLKPSPSSDNLYS) are compositionally biased toward polar residues. The span at 1957-1981 (GQGTSSTNTVGGTVSSQAAQAQPPA) shows a compositional bias: low complexity. The amphipathic alpha-helix stretch occupies residues 1985-2005 (SRKGTFTDDLHKLVDNWARDA). 2 positions are modified to phosphoserine: S2014 and S2030. Positions 2076–2097 (PFGTQWSGTGGPAPQPLGQFQP) are disordered. A phosphoserine mark is found at S2114 and S2116.

The protein belongs to the protein kinase superfamily. Ser/Thr protein kinase family. WNK subfamily. As to quaternary structure, interacts with WNK3. Interacts with WNK4; inhibiting the activity of WNK4. Interacts with SGK1; promoting its activation. Associates with the mTORC2 complex. Interacts with UVRAG. Interacts (via amphipathic alpha-helix region) with EMC2; promoting the ER membrane protein complex assembly. In terms of assembly, interacts with isoform 1; inhibiting isoform 1 activity. Mg(2+) serves as cofactor. Autophosphorylated at Ser-378 and Ser-382, promoting its activity. Autophosphorylation at Ser-382 is inhibited by intracellular calcium. Phosphorylation at Thr-58 increases ability to activate SGK1. Post-translationally, ubiquitinated by the BCR(KLHL3) complex, leading to its degradation. Also ubiquitinated by the BCR(KLHL2) complex. In terms of processing, may be O-glycosylated.

Its subcellular location is the cytoplasm. The protein resides in the nucleus. It localises to the cytoskeleton. The protein localises to the spindle. The enzyme catalyses L-seryl-[protein] + ATP = O-phospho-L-seryl-[protein] + ADP + H(+). The catalysed reaction is L-threonyl-[protein] + ATP = O-phospho-L-threonyl-[protein] + ADP + H(+). With respect to regulation, activated in response to hyperosmotic stress: cell shrinkage promotes formation of a membraneless compartment that concentrates WNK1 with its substrates, OXSR1/OSR1 and STK39/SPAK. Activation requires autophosphorylation of Ser-382 and, to a lower extent, Ser-378. Autophosphorylation and subsequent activation is inhibited by increases in intracellular ionic strength: Cl(-) potently inhibits WNK1 kinase activity via direct binding. Also inhibited by K(+) ions. Inhibited by Compound 12 ((5-Chloro-2-(2-((methyl-d3)amino)thiazol-4-yl)- pyridin-4-yl)(4-(4-chlorobenzyl)piperazin-1-yl)methanone). In terms of biological role, serine/threonine-protein kinase component of the WNK1-SPAK/OSR1 kinase cascade, which acts as a key regulator of blood pressure and regulatory volume increase by promoting ion influx. WNK1 mediates regulatory volume increase in response to hyperosmotic stress by acting as a molecular crowding sensor, which senses cell shrinkage and mediates formation of a membraneless compartment by undergoing liquid-liquid phase separation. The membraneless compartment concentrates WNK1 with its substrates, OXSR1/OSR1 and STK39/SPAK, promoting WNK1-dependent phosphorylation and activation of downstream kinases OXSR1/OSR1 and STK39/SPAK. Following activation, OXSR1/OSR1 and STK39/SPAK catalyze phosphorylation of ion cotransporters SLC12A1/NKCC2, SLC12A2/NKCC1, SLC12A5/KCC2 and SLC12A6/KCC3, regulating their activity. Phosphorylation of Na-K-Cl cotransporters SLC12A2/NKCC1 and SLC12A2/NKCC1 promote their activation and ion influx; simultaneously, phosphorylation of K-Cl cotransporters SLC12A5/KCC2 and SLC12A6/KCC3 inhibit their activity, blocking ion efflux. Also acts as a regulator of angiogenesis in endothelial cells. Also acts independently of the WNK1-SPAK/OSR1 kinase cascade by catalyzing phosphorylation of other substrates, such as SYT2, PCF11 and NEDD4L. Mediates phosphorylation of SYT2, regulating SYT2 association with phospholipids and membrane-binding. Regulates mRNA export in the nucleus by mediating phosphorylation of PCF11, thereby decreasing the association between PCF11 and POLR2A/RNA polymerase II and promoting mRNA export to the cytoplasm. Acts as a negative regulator of autophagy. Required for the abscission step during mitosis, independently of the WNK1-SPAK/OSR1 kinase cascade. WNK1 may also play a role in actin cytoskeletal reorganization. Also acts as a scaffold protein independently of its protein kinase activity: negatively regulates cell membrane localization of various transporters and channels, such as SLC4A4, SLC26A6, SLC26A9, TRPV4 and CFTR. Involved in the regulation of epithelial Na(+) channel (ENaC) by promoting activation of SGK1 in a kinase-independent manner. Probably activates SGK1 by acting as a scaffold protein that promotes the recruitment of SGK1 to the mTORC2 complex in response to chloride, leading to mTORC2-dependent phosphorylation and activation of SGK1. Acts as an assembly factor for the ER membrane protein complex independently of its protein kinase activity: associates with EMC2 in the cytoplasm via its amphipathic alpha-helix, and prevents EMC2 ubiquitination and subsequent degradation, thereby promoting EMC2 stabilization. Functionally, kinase-defective isoform specifically expressed in kidney, which acts as a dominant-negative regulator of the longer isoform 1. Does not directly inhibit WNK4 and has no direct effect on sodium and chloride ion transport. Down-regulates sodium-chloride cotransporter activity indirectly by inhibiting isoform 1, it associates with isoform 1 and attenuates its kinase activity. In kidney, may play an important role regulating sodium and potassium balance. Kinase-defective isoform produced by alternative promoter usage and alternative splicing. In Rattus norvegicus (Rat), this protein is Serine/threonine-protein kinase WNK1.